A 452-amino-acid polypeptide reads, in one-letter code: UDP-N-acetylmuramoylalanine--D-glutamate ligase (452 aa).

ATP is bound at residue Gly-119 to Thr-125.

Belongs to the MurCDEF family.

The protein localises to the cytoplasm. The enzyme catalyses UDP-N-acetyl-alpha-D-muramoyl-L-alanine + D-glutamate + ATP = UDP-N-acetyl-alpha-D-muramoyl-L-alanyl-D-glutamate + ADP + phosphate + H(+). Its pathway is cell wall biogenesis; peptidoglycan biosynthesis. Its function is as follows. Cell wall formation. Catalyzes the addition of glutamate to the nucleotide precursor UDP-N-acetylmuramoyl-L-alanine (UMA). The sequence is that of UDP-N-acetylmuramoylalanine--D-glutamate ligase from Streptococcus pyogenes serotype M12 (strain MGAS9429).